The chain runs to 193 residues: Peptidyl-tRNA hydrolase (193 aa).

Residue tyrosine 16 participates in tRNA binding. Residue histidine 21 is the Proton acceptor of the active site. Residues phenylalanine 67, asparagine 69, and asparagine 115 each coordinate tRNA.

This sequence belongs to the PTH family. In terms of assembly, monomer.

The protein localises to the cytoplasm. The catalysed reaction is an N-acyl-L-alpha-aminoacyl-tRNA + H2O = an N-acyl-L-amino acid + a tRNA + H(+). Its function is as follows. Hydrolyzes ribosome-free peptidyl-tRNAs (with 1 or more amino acids incorporated), which drop off the ribosome during protein synthesis, or as a result of ribosome stalling. Functionally, catalyzes the release of premature peptidyl moieties from peptidyl-tRNA molecules trapped in stalled 50S ribosomal subunits, and thus maintains levels of free tRNAs and 50S ribosomes. This is Peptidyl-tRNA hydrolase from Psychrobacter arcticus (strain DSM 17307 / VKM B-2377 / 273-4).